The primary structure comprises 1899 residues: Protein TIC 214 (1899 aa).

The next 6 membrane-spanning stretches (helical) occupy residues 23 to 43 (VVVG…SYLF), 64 to 84 (FITG…HLAL), 87 to 107 (PHTI…WNNH), 124 to 144 (LSIQ…LFIL), 172 to 192 (VGWL…LVCI), and 217 to 237 (WTAR…LGVH). 2 disordered regions span residues 256-280 (EQKK…TKKE) and 1581-1619 (PKDY…GLDL). Basic and acidic residues predominate over residues 269–280 (EKTFETKETKKE).

The protein belongs to the TIC214 family. In terms of assembly, part of the Tic complex.

Its subcellular location is the plastid. The protein localises to the chloroplast inner membrane. Functionally, involved in protein precursor import into chloroplasts. May be part of an intermediate translocation complex acting as a protein-conducting channel at the inner envelope. The polypeptide is Protein TIC 214 (Ceratophyllum demersum (Rigid hornwort)).